The primary structure comprises 436 residues: 4-hydroxyphenylpyruvate dioxygenase (436 aa).

2 VOC domains span residues 38–194 (RFHH…GFEV) and 210–370 (RLDH…IFTK). His213, His295, and Glu381 together coordinate Fe cation.

It belongs to the 4HPPD family. It depends on Fe cation as a cofactor.

The protein resides in the cytoplasm. The catalysed reaction is 3-(4-hydroxyphenyl)pyruvate + O2 = homogentisate + CO2. It functions in the pathway amino-acid degradation; L-phenylalanine degradation; acetoacetate and fumarate from L-phenylalanine: step 3/6. It participates in cofactor biosynthesis; prenylquinone biosynthesis. This Plectranthus scutellarioides (Coleus) protein is 4-hydroxyphenylpyruvate dioxygenase.